The following is a 392-amino-acid chain: 1-deoxy-D-xylulose 5-phosphate reductoisomerase (392 aa).

NADPH is bound by residues Thr10, Gly11, Ser12, Ile13, Asn38, and Asn124. Lys125 provides a ligand contact to 1-deoxy-D-xylulose 5-phosphate. Glu126 is an NADPH binding site. Asp150 contributes to the Mn(2+) binding site. 1-deoxy-D-xylulose 5-phosphate is bound by residues Ser151, Glu152, Ser176, and His199. Glu152 is a Mn(2+) binding site. Gly205 contributes to the NADPH binding site. 1-deoxy-D-xylulose 5-phosphate-binding residues include Ser212, Asn217, Lys218, and Glu221. Residue Glu221 participates in Mn(2+) binding.

Belongs to the DXR family. It depends on Mg(2+) as a cofactor. Mn(2+) is required as a cofactor.

The enzyme catalyses 2-C-methyl-D-erythritol 4-phosphate + NADP(+) = 1-deoxy-D-xylulose 5-phosphate + NADPH + H(+). It participates in isoprenoid biosynthesis; isopentenyl diphosphate biosynthesis via DXP pathway; isopentenyl diphosphate from 1-deoxy-D-xylulose 5-phosphate: step 1/6. Catalyzes the NADPH-dependent rearrangement and reduction of 1-deoxy-D-xylulose-5-phosphate (DXP) to 2-C-methyl-D-erythritol 4-phosphate (MEP). In Synechococcus sp. (strain JA-2-3B'a(2-13)) (Cyanobacteria bacterium Yellowstone B-Prime), this protein is 1-deoxy-D-xylulose 5-phosphate reductoisomerase.